Reading from the N-terminus, the 189-residue chain is CASP-like protein 1U2 (189 aa).

The Cytoplasmic segment spans residues 1-24; sequence MFGSDDSGCHVMDDDVAPPANGSK. The chain crosses the membrane as a helical span at residues 25–45; sequence AVTLLLRLITLALALTSAVLM. The Extracellular portion of the chain corresponds to 46–71; that stretch reads ATASECTIYGLDGATATTVTFKDYQP. Residues 72–92 traverse the membrane as a helical segment; the sequence is FIYLVGSNIAATILEVAAIYV. The Cytoplasmic segment spans residues 93-109; it reads QVGKGDDVEDAPMIPRV. A helical transmembrane segment spans residues 110 to 130; that stretch reads VLVVVDVAVQMLLYSATGAVF. Residues 131 to 158 lie on the Extracellular side of the membrane; the sequence is AAVMAYGPQISACTGAAGHFCEQVQRSK. The chain crosses the membrane as a helical span at residues 159–179; sequence IISLAASLSAVLAAVAKDVAL. Residues 180-189 are Cytoplasmic-facing; that stretch reads PCSVWPHPSS.

This sequence belongs to the Casparian strip membrane proteins (CASP) family. In terms of assembly, homodimer and heterodimers.

It localises to the cell membrane. The protein is CASP-like protein 1U2 of Sorghum bicolor (Sorghum).